A 493-amino-acid chain; its full sequence is Beta-amyrin 11-oxidase (493 aa).

A helical membrane pass occupies residues 7–23 (CMSAATLLVCYIFGSKF). A heme-binding site is contributed by cysteine 439.

It belongs to the cytochrome P450 family. Requires heme as cofactor. In terms of tissue distribution, expressed in roots and stolons. Not detected in leaves and stems.

Its subcellular location is the membrane. The catalysed reaction is beta-amyrin + 2 reduced [NADPH--hemoprotein reductase] + 2 O2 = 11-oxo-beta-amyrin + 2 oxidized [NADPH--hemoprotein reductase] + 3 H2O + 2 H(+). It carries out the reaction beta-amyrin + reduced [NADPH--hemoprotein reductase] + O2 = 11alpha-hydroxy-beta-amyrin + oxidized [NADPH--hemoprotein reductase] + H2O + H(+). It catalyses the reaction 11alpha-hydroxy-beta-amyrin + reduced [NADPH--hemoprotein reductase] + O2 = 11-oxo-beta-amyrin + oxidized [NADPH--hemoprotein reductase] + 2 H2O + H(+). Involved in the biosynthesis of Glycyrrhetinic acid (GA), a natural product which exhibits anti-inflammatory activity. Catalyzes 2 successive oxidations of beta-amyrin, producing a precursor of the triterpene sweetener glycyrrhizin. Unable to use 11-deoxoglycyrrhetinic acid or ent-kaurenoic acid as substrates. The polypeptide is Beta-amyrin 11-oxidase (Glycyrrhiza uralensis (Chinese licorice)).